The chain runs to 340 residues: Phenylalanine--tRNA ligase alpha subunit (340 aa).

Glu-255 contributes to the Mg(2+) binding site.

It belongs to the class-II aminoacyl-tRNA synthetase family. Phe-tRNA synthetase alpha subunit type 1 subfamily. In terms of assembly, tetramer of two alpha and two beta subunits. Requires Mg(2+) as cofactor.

It localises to the cytoplasm. It carries out the reaction tRNA(Phe) + L-phenylalanine + ATP = L-phenylalanyl-tRNA(Phe) + AMP + diphosphate + H(+). This is Phenylalanine--tRNA ligase alpha subunit from Exiguobacterium sp. (strain ATCC BAA-1283 / AT1b).